The primary structure comprises 173 residues: 6,7-dimethyl-8-ribityllumazine synthase (173 aa).

5-amino-6-(D-ribitylamino)uracil-binding positions include Y34, 65–67 (ALE), and 94–96 (CVI). A (2S)-2-hydroxy-3-oxobutyl phosphate-binding site is contributed by 99–100 (ET). The active-site Proton donor is the H102. N127 contributes to the 5-amino-6-(D-ribitylamino)uracil binding site. Residue R141 participates in (2S)-2-hydroxy-3-oxobutyl phosphate binding.

Belongs to the DMRL synthase family.

The catalysed reaction is (2S)-2-hydroxy-3-oxobutyl phosphate + 5-amino-6-(D-ribitylamino)uracil = 6,7-dimethyl-8-(1-D-ribityl)lumazine + phosphate + 2 H2O + H(+). It functions in the pathway cofactor biosynthesis; riboflavin biosynthesis; riboflavin from 2-hydroxy-3-oxobutyl phosphate and 5-amino-6-(D-ribitylamino)uracil: step 1/2. Catalyzes the formation of 6,7-dimethyl-8-ribityllumazine by condensation of 5-amino-6-(D-ribitylamino)uracil with 3,4-dihydroxy-2-butanone 4-phosphate. This is the penultimate step in the biosynthesis of riboflavin. In Methylorubrum extorquens (strain CM4 / NCIMB 13688) (Methylobacterium extorquens), this protein is 6,7-dimethyl-8-ribityllumazine synthase.